A 210-amino-acid polypeptide reads, in one-letter code: Small ribosomal subunit protein uS3 (210 aa).

Residues 38–106 (LKSFLKKRLY…EVYLNIQEVR (69 aa)) enclose the KH type-2 domain.

Belongs to the universal ribosomal protein uS3 family. In terms of assembly, part of the 30S ribosomal subunit. Forms a tight complex with proteins S10 and S14.

Its function is as follows. Binds the lower part of the 30S subunit head. Binds mRNA in the 70S ribosome, positioning it for translation. The polypeptide is Small ribosomal subunit protein uS3 (Geotalea daltonii (strain DSM 22248 / JCM 15807 / FRC-32) (Geobacter daltonii)).